The following is a 146-amino-acid chain: Ribonuclease H (146 aa).

Positions 1–141 (MKKVQLITDG…CDELATRAAR (141 aa)) constitute an RNase H type-1 domain. Residues D9, E47, D69, and D133 each contribute to the Mg(2+) site.

This sequence belongs to the RNase H family. In terms of assembly, monomer. Mg(2+) is required as a cofactor.

It localises to the cytoplasm. It catalyses the reaction Endonucleolytic cleavage to 5'-phosphomonoester.. Its function is as follows. Endonuclease that specifically degrades the RNA of RNA-DNA hybrids. This Solibacter usitatus (strain Ellin6076) protein is Ribonuclease H.